A 340-amino-acid polypeptide reads, in one-letter code: Protein-arginine kinase (340 aa).

Residues 21 to 242 (VVLSSRIRLA…EQIIMQERVA (222 aa)) form the Phosphagen kinase C-terminal domain. ATP contacts are provided by residues 24–28 (SSRIR), His79, Arg113, 164–168 (RASVM), and 195–200 (RGIYGE).

This sequence belongs to the ATP:guanido phosphotransferase family.

The catalysed reaction is L-arginyl-[protein] + ATP = N(omega)-phospho-L-arginyl-[protein] + ADP + H(+). Functionally, catalyzes the specific phosphorylation of arginine residues in proteins. The sequence is that of Protein-arginine kinase from Listeria monocytogenes serotype 4b (strain CLIP80459).